We begin with the raw amino-acid sequence, 375 residues long: Anhydro-N-acetylmuramic acid kinase (375 aa).

19–26 (GTSLDGVD) provides a ligand contact to ATP.

This sequence belongs to the anhydro-N-acetylmuramic acid kinase family.

The enzyme catalyses 1,6-anhydro-N-acetyl-beta-muramate + ATP + H2O = N-acetyl-D-muramate 6-phosphate + ADP + H(+). It functions in the pathway amino-sugar metabolism; 1,6-anhydro-N-acetylmuramate degradation. Its pathway is cell wall biogenesis; peptidoglycan recycling. In terms of biological role, catalyzes the specific phosphorylation of 1,6-anhydro-N-acetylmuramic acid (anhMurNAc) with the simultaneous cleavage of the 1,6-anhydro ring, generating MurNAc-6-P. Is required for the utilization of anhMurNAc either imported from the medium or derived from its own cell wall murein, and thus plays a role in cell wall recycling. In Ruegeria sp. (strain TM1040) (Silicibacter sp.), this protein is Anhydro-N-acetylmuramic acid kinase.